The following is a 349-amino-acid chain: tRNA pseudouridine synthase D (349 aa).

Phe27 is a binding site for substrate. Asp80 functions as the Nucleophile in the catalytic mechanism. Residue Asn129 coordinates substrate. In terms of domain architecture, TRUD spans Gly155–Leu303. Position 329 (Phe329) interacts with substrate.

It belongs to the pseudouridine synthase TruD family.

It catalyses the reaction uridine(13) in tRNA = pseudouridine(13) in tRNA. Functionally, responsible for synthesis of pseudouridine from uracil-13 in transfer RNAs. The polypeptide is tRNA pseudouridine synthase D (Shigella boydii serotype 18 (strain CDC 3083-94 / BS512)).